The primary structure comprises 474 residues: PTS system N-acetylmuramic acid-specific EIIBC component (474 aa).

The PTS EIIB type-1 domain maps to 1 to 89; it reads MAKEISSELL…SELLGEAPVQ (89 aa). Residues 1-123 are Cytoplasmic-facing; it reads MAKEISSELL…LAKFATIFTP (123 aa). C29 acts as the Phosphocysteine intermediate; for EIIB activity in catalysis. The PTS EIIC type-1 domain occupies 115–474; that stretch reads AKFATIFTPL…LFGCRNVNLD (360 aa). A helical membrane pass occupies residues 124-144; it reads LIPGFIAAGLLLGIATLIATV. Over 145–157 the chain is Periplasmic; it reads MHVPADAQGTLPD. Residues 158-178 form a helical membrane-spanning segment; it reads ALNFMKVFSKGLFTFLVILVG. The Cytoplasmic segment spans residues 179–180; that stretch reads YN. Residues 181 to 201 traverse the membrane as a helical segment; that stretch reads AAQAFGGTGVNGAIIAALFLL. At 202-217 the chain is on the periplasmic side; it reads GYNPAATTGYYAGFHD. Residues 218–238 form a helical membrane-spanning segment; that stretch reads FFGLPIDPRGNIIGVLIAAWA. The Cytoplasmic portion of the chain corresponds to 239–260; it reads CARIEGMVRRFMPDDLDMLLTS. The chain crosses the membrane as a helical span at residues 261–281; sequence LITLLITATLAYLIIMPLGGW. The Periplasmic portion of the chain corresponds to 282–301; that stretch reads LFEGMSWLFMHLNSNPLGCA. Residues 302 to 322 form a helical membrane-spanning segment; that stretch reads VLAGLFLIAVVFGVHQGFIPV. The Cytoplasmic segment spans residues 323 to 334; that stretch reads YLALMDSQGFNS. The chain crosses the membrane as a helical span at residues 335 to 355; sequence LFPILSMAGAGQVGAALALYW. Residues 356–368 are Periplasmic-facing; sequence RAQPHSALRSQVR. Residues 369–389 form a helical membrane-spanning segment; it reads GAIIPGLLGVGEPLIYGVTLP. Residues 390–393 lie on the Cytoplasmic side of the membrane; sequence RMKP. Residues 394–414 traverse the membrane as a helical segment; it reads FITACLGGAAGGLFIGLIAWW. Residues 415–440 lie on the Periplasmic side of the membrane; it reads GLPMGLNSAFGPSGLVALPLMTSAQG. The helical transmembrane segment at 441-461 threads the bilayer; the sequence is ILPAMAVYAGGILVAWVCGFI. Residues 462 to 474 are Cytoplasmic-facing; the sequence is FTTLFGCRNVNLD.

The protein localises to the cell inner membrane. The enzyme catalyses N-acetyl-beta-D-muramate(out) + N(pros)-phospho-L-histidyl-[protein] = N-acetyl-beta-D-muramate 6-phosphate(in) + L-histidyl-[protein]. Its function is as follows. The phosphoenolpyruvate-dependent sugar phosphotransferase system (sugar PTS), a major carbohydrate active transport system, catalyzes the phosphorylation of incoming sugar substrates concomitantly with their translocation across the cell membrane. This system is involved in N-acetylmuramic acid (MurNAc) transport, yielding cytoplasmic MurNAc-6-P. Is also able to take up anhydro-N-acetylmuramic acid (anhMurNAc), but cannot phosphorylate the carbon 6, probably because of the 1,6-anhydro ring. The sequence is that of PTS system N-acetylmuramic acid-specific EIIBC component (murP) from Escherichia coli O157:H7.